Here is a 151-residue protein sequence, read N- to C-terminus: GTP-dependent dephospho-CoA kinase (151 aa).

GTP is bound by residues Asp30, Val31, Asp49, Lys51, and Glu104.

It belongs to the GTP-dependent DPCK family.

It carries out the reaction 3'-dephospho-CoA + GTP = GDP + CoA + H(+). The protein operates within cofactor biosynthesis; coenzyme A biosynthesis. Functionally, catalyzes the GTP-dependent phosphorylation of the 3'-hydroxyl group of dephosphocoenzyme A to form coenzyme A (CoA). The sequence is that of GTP-dependent dephospho-CoA kinase from Cenarchaeum symbiosum (strain A).